The chain runs to 298 residues: Elongation factor Ts (298 aa).

The interval threonine 79–valine 82 is involved in Mg(2+) ion dislocation from EF-Tu.

This sequence belongs to the EF-Ts family.

It is found in the cytoplasm. In terms of biological role, associates with the EF-Tu.GDP complex and induces the exchange of GDP to GTP. It remains bound to the aminoacyl-tRNA.EF-Tu.GTP complex up to the GTP hydrolysis stage on the ribosome. The protein is Elongation factor Ts (tsf) of Mycoplasma pneumoniae (strain ATCC 29342 / M129 / Subtype 1) (Mycoplasmoides pneumoniae).